The chain runs to 252 residues: Pantothenate synthetase (252 aa).

29–36 (MGNLHAGH) serves as a coordination point for ATP. Residue His-36 is the Proton donor of the active site. Residue Gln-60 coordinates (R)-pantoate. Gln-60 provides a ligand contact to beta-alanine. 146–149 (GEKD) provides a ligand contact to ATP. Gln-152 contacts (R)-pantoate. Residues Val-175 and 183–186 (CSSR) contribute to the ATP site.

It belongs to the pantothenate synthetase family. Homodimer.

The protein localises to the cytoplasm. The catalysed reaction is (R)-pantoate + beta-alanine + ATP = (R)-pantothenate + AMP + diphosphate + H(+). The protein operates within cofactor biosynthesis; (R)-pantothenate biosynthesis; (R)-pantothenate from (R)-pantoate and beta-alanine: step 1/1. Its function is as follows. Catalyzes the condensation of pantoate with beta-alanine in an ATP-dependent reaction via a pantoyl-adenylate intermediate. In Legionella pneumophila (strain Corby), this protein is Pantothenate synthetase.